The primary structure comprises 292 residues: Probable starch degradation products transport system permease protein AmyD (292 aa).

Helical transmembrane passes span 15 to 35 (WLFI…PFII), 77 to 97 (FAVA…MLVT), 110 to 130 (FYLP…FIFV), 156 to 176 (FWGL…VIYI), 205 to 225 (VFPL…SNSF), and 260 to 280 (MAVG…ISVI). Residues 71 to 281 (IIFTAKFAVA…LIIAVISVIQ (211 aa)) form the ABC transmembrane type-1 domain.

The protein belongs to the binding-protein-dependent transport system permease family. MalFG subfamily.

The protein resides in the cell membrane. Functionally, probably part of a binding-protein-dependent transport system starch degradation products. Probably responsible for the translocation of the substrate across the membrane. In Thermoanaerobacterium thermosulfurigenes (Clostridium thermosulfurogenes), this protein is Probable starch degradation products transport system permease protein AmyD (amyD).